Reading from the N-terminus, the 159-residue chain is 6,7-dimethyl-8-ribityllumazine synthase (159 aa).

Residues Tyr23, 58 to 60 (AYE), and 82 to 84 (TII) each bind 5-amino-6-(D-ribitylamino)uracil. His90 acts as the Proton donor in catalysis. Ile115 lines the 5-amino-6-(D-ribitylamino)uracil pocket. A (2S)-2-hydroxy-3-oxobutyl phosphate-binding site is contributed by Arg129.

It belongs to the DMRL synthase family. As to quaternary structure, forms an icosahedral capsid composed of 60 subunits, arranged as a dodecamer of pentamers.

It carries out the reaction (2S)-2-hydroxy-3-oxobutyl phosphate + 5-amino-6-(D-ribitylamino)uracil = 6,7-dimethyl-8-(1-D-ribityl)lumazine + phosphate + 2 H2O + H(+). It functions in the pathway cofactor biosynthesis; riboflavin biosynthesis; riboflavin from 2-hydroxy-3-oxobutyl phosphate and 5-amino-6-(D-ribitylamino)uracil: step 1/2. In terms of biological role, catalyzes the formation of 6,7-dimethyl-8-ribityllumazine by condensation of 5-amino-6-(D-ribitylamino)uracil with 3,4-dihydroxy-2-butanone 4-phosphate. This is the penultimate step in the biosynthesis of riboflavin. This chain is 6,7-dimethyl-8-ribityllumazine synthase, found in Buchnera aphidicola subsp. Baizongia pistaciae (strain Bp).